The primary structure comprises 251 residues: Flap endonuclease Xni (251 aa).

Aspartate 104 serves as a coordination point for Mg(2+). Residues 160-250 (VLPRQLPDYW…SGNLQQLRLK (91 aa)) enclose the 5'-3' exonuclease domain. The K(+) site is built by leucine 171, alanine 172, proline 180, valine 182, and valine 185. Residues 184–189 (GVGAKT) form an interaction with DNA region.

This sequence belongs to the Xni family. It depends on Mg(2+) as a cofactor. K(+) is required as a cofactor.

Functionally, has flap endonuclease activity. During DNA replication, flap endonucleases cleave the 5'-overhanging flap structure that is generated by displacement synthesis when DNA polymerase encounters the 5'-end of a downstream Okazaki fragment. The chain is Flap endonuclease Xni from Yersinia pestis bv. Antiqua (strain Nepal516).